We begin with the raw amino-acid sequence, 235 residues long: Small ribosomal subunit protein uS2c (235 aa).

The protein belongs to the universal ribosomal protein uS2 family.

Its subcellular location is the plastid. The protein resides in the chloroplast. This chain is Small ribosomal subunit protein uS2c (rps2), found in Cryptomeria japonica (Japanese cedar).